A 313-amino-acid polypeptide reads, in one-letter code: Ribosomal RNA small subunit methyltransferase H (313 aa).

S-adenosyl-L-methionine is bound by residues 35-37 (GGH), aspartate 55, phenylalanine 80, aspartate 102, and glutamine 109.

It belongs to the methyltransferase superfamily. RsmH family.

It localises to the cytoplasm. It carries out the reaction cytidine(1402) in 16S rRNA + S-adenosyl-L-methionine = N(4)-methylcytidine(1402) in 16S rRNA + S-adenosyl-L-homocysteine + H(+). In terms of biological role, specifically methylates the N4 position of cytidine in position 1402 (C1402) of 16S rRNA. The chain is Ribosomal RNA small subunit methyltransferase H from Shewanella loihica (strain ATCC BAA-1088 / PV-4).